A 309-amino-acid chain; its full sequence is Homoserine O-succinyltransferase (309 aa).

Cys142 functions as the Acyl-thioester intermediate in the catalytic mechanism. Substrate-binding residues include Lys163 and Ser192. The active-site Proton acceptor is the His235. Glu237 is a catalytic residue. Arg249 contacts substrate.

This sequence belongs to the MetA family.

The protein resides in the cytoplasm. It catalyses the reaction L-homoserine + succinyl-CoA = O-succinyl-L-homoserine + CoA. The protein operates within amino-acid biosynthesis; L-methionine biosynthesis via de novo pathway; O-succinyl-L-homoserine from L-homoserine: step 1/1. Functionally, transfers a succinyl group from succinyl-CoA to L-homoserine, forming succinyl-L-homoserine. The sequence is that of Homoserine O-succinyltransferase from Proteus mirabilis (strain HI4320).